The sequence spans 402 residues: UPF0597 protein THA_1286 (402 aa).

It belongs to the UPF0597 family.

The protein is UPF0597 protein THA_1286 of Thermosipho africanus (strain TCF52B).